Consider the following 331-residue polypeptide: Ketol-acid reductoisomerase (NADP(+)) (331 aa).

One can recognise a KARI N-terminal Rossmann domain in the interval 2 to 182 (AKIYTDKDAS…GATRAGVIET (181 aa)). NADP(+)-binding positions include 25-28 (YGIQ), R48, S53, and 83-86 (DMEQ). The active site involves H108. G134 contacts NADP(+). Positions 183–328 (TFAEETETDL…AEMRKLLFGR (146 aa)) constitute a KARI C-terminal knotted domain. Residues D191, E195, E227, and E231 each contribute to the Mg(2+) site. Position 252 (S252) interacts with substrate.

Belongs to the ketol-acid reductoisomerase family. The cofactor is Mg(2+).

It catalyses the reaction (2R)-2,3-dihydroxy-3-methylbutanoate + NADP(+) = (2S)-2-acetolactate + NADPH + H(+). The enzyme catalyses (2R,3R)-2,3-dihydroxy-3-methylpentanoate + NADP(+) = (S)-2-ethyl-2-hydroxy-3-oxobutanoate + NADPH + H(+). The protein operates within amino-acid biosynthesis; L-isoleucine biosynthesis; L-isoleucine from 2-oxobutanoate: step 2/4. It functions in the pathway amino-acid biosynthesis; L-valine biosynthesis; L-valine from pyruvate: step 2/4. Involved in the biosynthesis of branched-chain amino acids (BCAA). Catalyzes an alkyl-migration followed by a ketol-acid reduction of (S)-2-acetolactate (S2AL) to yield (R)-2,3-dihydroxy-isovalerate. In the isomerase reaction, S2AL is rearranged via a Mg-dependent methyl migration to produce 3-hydroxy-3-methyl-2-ketobutyrate (HMKB). In the reductase reaction, this 2-ketoacid undergoes a metal-dependent reduction by NADPH to yield (R)-2,3-dihydroxy-isovalerate. The polypeptide is Ketol-acid reductoisomerase (NADP(+)) (Pyrobaculum islandicum (strain DSM 4184 / JCM 9189 / GEO3)).